The following is a 512-amino-acid chain: Probable DNA ligase (512 aa).

E208 contributes to the ATP binding site. The N6-AMP-lysine intermediate role is filled by K210. ATP-binding residues include R215, R230, E259, F299, R374, and K380.

The protein belongs to the ATP-dependent DNA ligase family. Requires Mg(2+) as cofactor.

It catalyses the reaction ATP + (deoxyribonucleotide)n-3'-hydroxyl + 5'-phospho-(deoxyribonucleotide)m = (deoxyribonucleotide)n+m + AMP + diphosphate.. Its function is as follows. DNA ligase that seals nicks in double-stranded DNA during DNA replication, DNA recombination and DNA repair. The chain is Probable DNA ligase from Streptomyces coelicolor (strain ATCC BAA-471 / A3(2) / M145).